Consider the following 339-residue polypeptide: Anthranilate phosphoribosyltransferase (339 aa).

5-phospho-alpha-D-ribose 1-diphosphate contacts are provided by residues glycine 79, 82 to 83, serine 87, 89 to 92, 107 to 115, and serine 119; these read GD, NIST, and KHGNRSISS. Glycine 79 lines the anthranilate pocket. Serine 91 contacts Mg(2+). Asparagine 110 contacts anthranilate. Anthranilate is bound at residue arginine 165. Mg(2+) contacts are provided by aspartate 224 and glutamate 225.

It belongs to the anthranilate phosphoribosyltransferase family. In terms of assembly, homodimer. The cofactor is Mg(2+).

It carries out the reaction N-(5-phospho-beta-D-ribosyl)anthranilate + diphosphate = 5-phospho-alpha-D-ribose 1-diphosphate + anthranilate. It participates in amino-acid biosynthesis; L-tryptophan biosynthesis; L-tryptophan from chorismate: step 2/5. Functionally, catalyzes the transfer of the phosphoribosyl group of 5-phosphorylribose-1-pyrophosphate (PRPP) to anthranilate to yield N-(5'-phosphoribosyl)-anthranilate (PRA). The chain is Anthranilate phosphoribosyltransferase from Listeria welshimeri serovar 6b (strain ATCC 35897 / DSM 20650 / CCUG 15529 / CIP 8149 / NCTC 11857 / SLCC 5334 / V8).